Reading from the N-terminus, the 613-residue chain is Tetratricopeptide repeat protein 39A (613 aa).

TPR repeat units lie at residues A315–W348, C505–I538, and P546–Y579.

It belongs to the TTC39 family.

The polypeptide is Tetratricopeptide repeat protein 39A (TTC39A) (Homo sapiens (Human)).